The chain runs to 206 residues: N-(5'-phosphoribosyl)anthranilate isomerase (206 aa).

Belongs to the TrpF family.

It carries out the reaction N-(5-phospho-beta-D-ribosyl)anthranilate = 1-(2-carboxyphenylamino)-1-deoxy-D-ribulose 5-phosphate. It functions in the pathway amino-acid biosynthesis; L-tryptophan biosynthesis; L-tryptophan from chorismate: step 3/5. This Nitrosococcus oceani (strain ATCC 19707 / BCRC 17464 / JCM 30415 / NCIMB 11848 / C-107) protein is N-(5'-phosphoribosyl)anthranilate isomerase.